Reading from the N-terminus, the 354-residue chain is S-adenosylmethionine:tRNA ribosyltransferase-isomerase (354 aa).

Belongs to the QueA family. Monomer.

It localises to the cytoplasm. The enzyme catalyses 7-aminomethyl-7-carbaguanosine(34) in tRNA + S-adenosyl-L-methionine = epoxyqueuosine(34) in tRNA + adenine + L-methionine + 2 H(+). It functions in the pathway tRNA modification; tRNA-queuosine biosynthesis. In terms of biological role, transfers and isomerizes the ribose moiety from AdoMet to the 7-aminomethyl group of 7-deazaguanine (preQ1-tRNA) to give epoxyqueuosine (oQ-tRNA). This Salmonella gallinarum (strain 287/91 / NCTC 13346) protein is S-adenosylmethionine:tRNA ribosyltransferase-isomerase.